Consider the following 585-residue polypeptide: Probable long-chain-fatty-acid--AMP ligase FadD30 (585 aa).

It belongs to the ATP-dependent AMP-binding enzyme family.

It participates in lipid metabolism; fatty acid biosynthesis. Functionally, catalyzes the activation of long-chain fatty acids as acyl-adenylates (acyl-AMP), which are then transferred to a multifunctional polyketide synthase (PKS) for further chain extension. The polypeptide is Probable long-chain-fatty-acid--AMP ligase FadD30 (fadD30) (Mycobacterium tuberculosis (strain CDC 1551 / Oshkosh)).